Reading from the N-terminus, the 21-residue chain is Tertiapin (21 aa).

2 cysteine pairs are disulfide-bonded: C3/C14 and C5/C18.

Post-translationally, oxidation of Met-13 results in the loss of biological activity. An amidation at Lys-21 is suggested in Ref.1. In terms of tissue distribution, expressed by the venom gland.

Its subcellular location is the secreted. Its function is as follows. Presynaptic neurotoxin that blocks the inwardly rectifying Kir1.1/KCNJ1 and Kir3.1/3.4 (KCNJ3/KCNJ5) potassium channels with high affinity by binding to the M1-M2 linker region of these channels in a 1:1 stoichiometry. It may block the potassium channel pore by occluding its alpha helix into the channel vestibule. Tertiapin-Q also inhibits calcium-activated large conductance BK-type (KCNMA) potassium channels in a concentration-, and voltage-dependent manner, in addition to inhibiting Kir3.1/3.2 (KCNJ3/KCNJ6) heteromultimers potassium channels. It can prevent dose-dependently acetylcholine(ACh)-induced atrioventricular blocks in mammalian hearts, as KCNJ3/KCNJ5 channels (also named I(KACh), because these channels are activated by ACh) are found in mammalian myocytes. Interacts specifically with calmodulin in the presence of calcium. The protein is Tertiapin of Apis mellifera (Honeybee).